The following is a 213-amino-acid chain: Phosphoribosyl-dephospho-CoA transferase (213 aa).

Residues D135 and D137 contribute to the active site.

It belongs to the MdcG family.

The enzyme catalyses apo-[malonate decarboxylase ACP] + 2'-(5''-triphospho-alpha-D-ribosyl)-3'-dephospho-CoA = holo-[malonate decarboxylase ACP] + diphosphate. Its function is as follows. Transfers 2'-(5-triphosphoribosyl)-3'-dephosphocoenzyme-A to the apo-[acyl-carrier-protein] of the malonate decarboxylase to yield holo-[acyl-carrier-protein]. The chain is Phosphoribosyl-dephospho-CoA transferase from Xanthomonas campestris pv. campestris (strain ATCC 33913 / DSM 3586 / NCPPB 528 / LMG 568 / P 25).